The primary structure comprises 520 residues: GMP synthase [glutamine-hydrolyzing] (520 aa).

The region spanning 9-202 (SVLIVDFGSQ…IHNIAGIKGD (194 aa)) is the Glutamine amidotransferase type-1 domain. Cysteine 86 functions as the Nucleophile in the catalytic mechanism. Residues histidine 176 and glutamate 178 contribute to the active site. Residues 203–395 (WSMSAYRQKA…LGLPDSFIGR (193 aa)) enclose the GMPS ATP-PPase domain. Residue 230-236 (SGGVDSS) participates in ATP binding.

Homodimer.

It carries out the reaction XMP + L-glutamine + ATP + H2O = GMP + L-glutamate + AMP + diphosphate + 2 H(+). The protein operates within purine metabolism; GMP biosynthesis; GMP from XMP (L-Gln route): step 1/1. In terms of biological role, catalyzes the synthesis of GMP from XMP. The chain is GMP synthase [glutamine-hydrolyzing] from Rhizobium johnstonii (strain DSM 114642 / LMG 32736 / 3841) (Rhizobium leguminosarum bv. viciae).